The chain runs to 153 residues: MNTSPKMEMEMKMETKAAPEAGMIKKSNEEWRTVLSPEQFKILREKSIEKRGSGEYVKLFEEGIYCCVGCGNPVYKSTTKFDSGCGWPAFFDAIPGAINRTEERAGLRYEITCTKCDGHLGHVLKNEGFPTPTDERHCVNSVALKFSSAITSQ.

The region spanning 28-149 (NEEWRTVLSP…NSVALKFSSA (122 aa)) is the MsrB domain. Zn(2+)-binding residues include Cys-67, Cys-70, Cys-113, and Cys-116. The cysteines at positions 85 and 138 are disulfide-linked. Cys-138 serves as the catalytic Nucleophile.

This sequence belongs to the MsrB Met sulfoxide reductase family. Zn(2+) is required as a cofactor.

It localises to the cytoplasm. It is found in the cytosol. The catalysed reaction is L-methionyl-[protein] + [thioredoxin]-disulfide + H2O = L-methionyl-(R)-S-oxide-[protein] + [thioredoxin]-dithiol. Catalyzes the reduction of methionine sulfoxide (MetSO) to methionine in proteins. Plays a protective role against oxidative stress by restoring activity to proteins that have been inactivated by methionine oxidation. MSRB family specifically reduces the MetSO R-enantiomer. The polypeptide is Peptide methionine sulfoxide reductase B6 (MSRB6) (Arabidopsis thaliana (Mouse-ear cress)).